Consider the following 358-residue polypeptide: UDP-N-acetylglucosamine--N-acetylmuramyl-(pentapeptide) pyrophosphoryl-undecaprenol N-acetylglucosamine transferase (358 aa).

Residues 11-13 (TGG), N120, R161, S188, and Q282 each bind UDP-N-acetyl-alpha-D-glucosamine.

The protein belongs to the glycosyltransferase 28 family. MurG subfamily.

It localises to the cell inner membrane. It catalyses the reaction di-trans,octa-cis-undecaprenyl diphospho-N-acetyl-alpha-D-muramoyl-L-alanyl-D-glutamyl-meso-2,6-diaminopimeloyl-D-alanyl-D-alanine + UDP-N-acetyl-alpha-D-glucosamine = di-trans,octa-cis-undecaprenyl diphospho-[N-acetyl-alpha-D-glucosaminyl-(1-&gt;4)]-N-acetyl-alpha-D-muramoyl-L-alanyl-D-glutamyl-meso-2,6-diaminopimeloyl-D-alanyl-D-alanine + UDP + H(+). It functions in the pathway cell wall biogenesis; peptidoglycan biosynthesis. In terms of biological role, cell wall formation. Catalyzes the transfer of a GlcNAc subunit on undecaprenyl-pyrophosphoryl-MurNAc-pentapeptide (lipid intermediate I) to form undecaprenyl-pyrophosphoryl-MurNAc-(pentapeptide)GlcNAc (lipid intermediate II). This is UDP-N-acetylglucosamine--N-acetylmuramyl-(pentapeptide) pyrophosphoryl-undecaprenol N-acetylglucosamine transferase from Parasynechococcus marenigrum (strain WH8102).